The following is a 390-amino-acid chain: Succinate--CoA ligase [ADP-forming] subunit beta (390 aa).

In terms of domain architecture, ATP-grasp spans 9–245; it reads KHLLKKYNIP…TTQEDEHETM (237 aa). Residues Lys-46, 53–55, Glu-99, Ser-102, and Glu-107 each bind ATP; that span reads GRG. Asn-200 and Asp-214 together coordinate Mg(2+). Substrate contacts are provided by residues Asn-265 and 322-324; that span reads GIV.

This sequence belongs to the succinate/malate CoA ligase beta subunit family. As to quaternary structure, heterotetramer of two alpha and two beta subunits. The cofactor is Mg(2+).

The enzyme catalyses succinate + ATP + CoA = succinyl-CoA + ADP + phosphate. It carries out the reaction GTP + succinate + CoA = succinyl-CoA + GDP + phosphate. Its pathway is carbohydrate metabolism; tricarboxylic acid cycle; succinate from succinyl-CoA (ligase route): step 1/1. Functionally, succinyl-CoA synthetase functions in the citric acid cycle (TCA), coupling the hydrolysis of succinyl-CoA to the synthesis of either ATP or GTP and thus represents the only step of substrate-level phosphorylation in the TCA. The beta subunit provides nucleotide specificity of the enzyme and binds the substrate succinate, while the binding sites for coenzyme A and phosphate are found in the alpha subunit. The polypeptide is Succinate--CoA ligase [ADP-forming] subunit beta (Coxiella burnetii (strain CbuK_Q154) (Coxiella burnetii (strain Q154))).